Consider the following 319-residue polypeptide: Homoserine kinase (319 aa).

100-110 (PLSSGMGSSAS) is an ATP binding site.

It belongs to the GHMP kinase family. Homoserine kinase subfamily.

It is found in the cytoplasm. The enzyme catalyses L-homoserine + ATP = O-phospho-L-homoserine + ADP + H(+). It functions in the pathway amino-acid biosynthesis; L-threonine biosynthesis; L-threonine from L-aspartate: step 4/5. Its function is as follows. Catalyzes the ATP-dependent phosphorylation of L-homoserine to L-homoserine phosphate. This chain is Homoserine kinase, found in Chloroherpeton thalassium (strain ATCC 35110 / GB-78).